Consider the following 101-residue polypeptide: Urease subunit beta (101 aa).

It belongs to the urease beta subunit family. In terms of assembly, heterotrimer of UreA (gamma), UreB (beta) and UreC (alpha) subunits. Three heterotrimers associate to form the active enzyme.

It is found in the cytoplasm. The enzyme catalyses urea + 2 H2O + H(+) = hydrogencarbonate + 2 NH4(+). Its pathway is nitrogen metabolism; urea degradation; CO(2) and NH(3) from urea (urease route): step 1/1. In Paraburkholderia phytofirmans (strain DSM 17436 / LMG 22146 / PsJN) (Burkholderia phytofirmans), this protein is Urease subunit beta.